Reading from the N-terminus, the 451-residue chain is Serine--tRNA ligase, cytoplasmic (451 aa).

A disulfide bridge links Cys-213 with Cys-244. 238 to 240 is a binding site for L-serine; sequence TAE. ATP-binding positions include 269-271 and Val-285; that span reads RKE. Glu-292 is an L-serine binding site. 358–361 contacts ATP; the sequence is ELVS. Thr-396 lines the L-serine pocket.

This sequence belongs to the class-II aminoacyl-tRNA synthetase family. Type-1 seryl-tRNA synthetase subfamily. Homodimer. The tRNA molecule binds across the dimer.

Its subcellular location is the cytoplasm. The protein resides in the cytosol. It catalyses the reaction tRNA(Ser) + L-serine + ATP = L-seryl-tRNA(Ser) + AMP + diphosphate + H(+). Its function is as follows. Catalyzes the attachment of serine to tRNA(Ser) in a two-step reaction: serine is first activated by ATP to form Ser-AMP and then transferred to the acceptor end of tRNA(Ser). This chain is Serine--tRNA ligase, cytoplasmic, found in Arabidopsis thaliana (Mouse-ear cress).